The chain runs to 350 residues: Biotin synthase (350 aa).

In terms of domain architecture, Radical SAM core spans 38–256; that stretch reads NHVQVSTLLS…IAVARIMMPE (219 aa). Positions 53, 57, and 60 each coordinate [4Fe-4S] cluster. [2Fe-2S] cluster-binding residues include C97, C128, C188, and R260.

It belongs to the radical SAM superfamily. Biotin synthase family. As to quaternary structure, homodimer. The cofactor is [4Fe-4S] cluster. It depends on [2Fe-2S] cluster as a cofactor.

It catalyses the reaction (4R,5S)-dethiobiotin + (sulfur carrier)-SH + 2 reduced [2Fe-2S]-[ferredoxin] + 2 S-adenosyl-L-methionine = (sulfur carrier)-H + biotin + 2 5'-deoxyadenosine + 2 L-methionine + 2 oxidized [2Fe-2S]-[ferredoxin]. It functions in the pathway cofactor biosynthesis; biotin biosynthesis; biotin from 7,8-diaminononanoate: step 2/2. Its function is as follows. Catalyzes the conversion of dethiobiotin (DTB) to biotin by the insertion of a sulfur atom into dethiobiotin via a radical-based mechanism. This is Biotin synthase from Aliivibrio fischeri (strain ATCC 700601 / ES114) (Vibrio fischeri).